We begin with the raw amino-acid sequence, 388 residues long: S-adenosylmethionine synthase (388 aa).

Histidine 16 contacts ATP. Residue aspartate 18 coordinates Mg(2+). Residue glutamate 44 coordinates K(+). The L-methionine site is built by glutamate 57 and glutamine 100. The segment at 100-110 (QSPEIAQGVDR) is flexible loop. ATP is bound by residues 165–167 (DAK), aspartate 240, 246–247 (RK), alanine 263, and lysine 267. Aspartate 240 provides a ligand contact to L-methionine. Lysine 271 provides a ligand contact to L-methionine.

This sequence belongs to the AdoMet synthase family. Homotetramer; dimer of dimers. It depends on Mg(2+) as a cofactor. The cofactor is K(+).

The protein localises to the cytoplasm. The catalysed reaction is L-methionine + ATP + H2O = S-adenosyl-L-methionine + phosphate + diphosphate. Its pathway is amino-acid biosynthesis; S-adenosyl-L-methionine biosynthesis; S-adenosyl-L-methionine from L-methionine: step 1/1. Catalyzes the formation of S-adenosylmethionine (AdoMet) from methionine and ATP. The overall synthetic reaction is composed of two sequential steps, AdoMet formation and the subsequent tripolyphosphate hydrolysis which occurs prior to release of AdoMet from the enzyme. The chain is S-adenosylmethionine synthase from Acinetobacter baylyi (strain ATCC 33305 / BD413 / ADP1).